We begin with the raw amino-acid sequence, 1076 residues long: Ribosome quality control complex subunit NEMF (1076 aa).

Position 7 is a phosphothreonine (threonine 7). A coiled-coil region spans residues 296–359 (VDEFYSKIEG…LIEMNLQIVD (64 aa)). Residue serine 417 is modified to Phosphoserine. The segment at 420–453 (EDDDVDGDVNVEKNETEPPKGKKKKQKNKQLQKP) is disordered. Residues 429–439 (NVEKNETEPPK) show a composition bias toward basic and acidic residues. The segment covering 440-449 (GKKKKQKNKQ) has biased composition (basic residues). Positions 483–514 (AAKKTQKTVEAAEKAFKSAEKKTKQTLKEVQT) form a coiled coil. 2 stretches are compositionally biased toward acidic residues: residues 691-710 (ISEE…EDKE) and 742-754 (LIQE…EGEY). 2 disordered regions span residues 691-715 (ISEE…HETP) and 742-972 (LIQE…DLDQ). Phosphoserine is present on residues serine 747, serine 748, and serine 763. Basic and acidic residues predominate over residues 755-768 (EEVRKDQDSVGEMK). Over residues 777–795 (YPDTTIDLSHLQPQRSIQK) the composition is skewed to polar residues. Residue serine 831 is modified to Phosphoserine. Over residues 839–854 (LEGKDKEKESTVHIET) the composition is skewed to basic and acidic residues. Positions 869–894 (KRGQKSKMKKMKEKYKDQDEEDRELI) form a coiled coil. Positions 870–881 (RGQKSKMKKMKE) are enriched in basic residues. Basic and acidic residues predominate over residues 937–965 (DNIKKETPFLEVITHELQDFAVDDPHDDK).

Belongs to the NEMF family. In terms of assembly, component of the ribosome quality control complex (RQC), composed of the E3 ubiquitin ligase LTN1, TCF25 and NEMF associated with the 60S ribosomal subunit. The complex probably also contains VCP/p97 and its ubiquitin-binding cofactors. Interacts (via its N-terminus) with XPO1. As to expression, expressed in brain, heart, liver, lung, spleen, and skeletal muscle. Also expressed at lower levels in stomach and testis.

It is found in the cytoplasm. Its subcellular location is the cytosol. The protein resides in the nucleus. Its function is as follows. Key component of the ribosome quality control complex (RQC), a ribosome-associated complex that mediates the extraction of incompletely synthesized nascent chains from stalled ribosomes as well as their ubiquitin-mediated proteasomal degradation. Thereby, frees 60S subunit ribosomes from the stalled translation complex and prevents the accumulation of nascent polypeptide chains that are potentially toxic for the cell. Within the RQC complex, NEMF specifically binds stalled 60S ribosomal subunits by recognizing an exposed, nascent chain-conjugated tRNA moiety and promotes the recruitment of LTN1 to stalled 60S subunits. Following binding to stalled 60S ribosomal subunits, NEMF mediates CAT tailing by recruiting alanine-charged tRNA to the A-site and directing the elongation of stalled nascent chains independently of mRNA or 40S subunits, leading to non-templated C-terminal alanine extensions (CAT tails). Mainly recruits alanine-charged tRNAs, but can also other amino acid-charged tRNAs. CAT tailing is required to promote ubiquitination of stalled nascent chains by different E3 ubiquitin-protein ligases. In the canonical RQC pathway (RQC-L), CAT tailing facilitates LTN1-dependent ubiquitination by exposing lysine residues that would otherwise remain buried in the ribosomal exit tunnel. In the alternative RQC pathway (RQC-C) CAT tailing creates an C-degron mainly composed of alanine that is recognized by the CRL2(KLHDC10) and RCHY1/PIRH2 E3 ligases, leading to ubiquitination and degradation of stalled nascent chains. NEMF may also indirectly play a role in nuclear export. The sequence is that of Ribosome quality control complex subunit NEMF from Homo sapiens (Human).